Reading from the N-terminus, the 535-residue chain is Peptide chain release factor 3 (535 aa).

A tr-type G domain is found at 8–277; sequence KRRRTFAIIS…TLVDLAPPPG (270 aa). GTP contacts are provided by residues 17–24, 85–89, and 139–142; these read SHPDAGKT, DTPGH, and NKLD.

Belongs to the TRAFAC class translation factor GTPase superfamily. Classic translation factor GTPase family. PrfC subfamily.

Its subcellular location is the cytoplasm. Increases the formation of ribosomal termination complexes and stimulates activities of RF-1 and RF-2. It binds guanine nucleotides and has strong preference for UGA stop codons. It may interact directly with the ribosome. The stimulation of RF-1 and RF-2 is significantly reduced by GTP and GDP, but not by GMP. This Nitrosomonas eutropha (strain DSM 101675 / C91 / Nm57) protein is Peptide chain release factor 3.